An 843-amino-acid polypeptide reads, in one-letter code: Excretory canal abnormal protein 6 (843 aa).

Disordered stretches follow at residues 54-135 (QLKD…EKKT), 568-601 (TLES…PAKT), 748-767 (TPLS…MTAE), and 773-843 (TMKP…PKWV). Pro residues-rich tracts occupy residues 66-76 (TPPPPPPPPPL) and 83-103 (APPP…PPPI). The region spanning 127-512 (FLPKKEKKTK…KEEKKETQTT (386 aa)) is the FH2 domain. Composition is skewed to polar residues over residues 776–792 (PSVS…TSSH) and 819–830 (IPQSPTVTSSAR).

This sequence belongs to the formin homology family. In terms of tissue distribution, expressed in the excretory cell and mostly accumulates at the tip of the excretory cell canals.

Its subcellular location is the cytoplasm. The protein localises to the cytoskeleton. In terms of biological role, constitutively active protein required for microtubule and F-actin growth, structural maintenance and organization during excretory cell tubulogenesis. This is Excretory canal abnormal protein 6 from Caenorhabditis elegans.